Consider the following 455-residue polypeptide: UDP-glycosyltransferase 75B2 (455 aa).

His16 functions as the Proton acceptor in the catalytic mechanism. His16 is an an anthocyanidin binding site. UDP-alpha-D-glucose is bound by residues Gln337, His352, Trp355, Ser357, Glu360, Asp376, and Gln377.

Belongs to the UDP-glycosyltransferase family.

It carries out the reaction (indol-3-yl)acetate + UDP-alpha-D-glucose = 1-O-(indol-3-ylacetyl)-beta-D-glucose + UDP. The protein operates within plant hormone metabolism; auxin conjugation. In terms of biological role, possesses low catalytic activity in vitro. Also active as glucosyltransferase in vitro on benzoates and benzoate derivatives. This is UDP-glycosyltransferase 75B2 (UGT75B2) from Arabidopsis thaliana (Mouse-ear cress).